The chain runs to 275 residues: MASRGVVGIFLLSALPLLCLELRRGKPDLGIKDLILLCGRIFLLLALLTLIISVTTSWVNSFKPSQVYLKEEEEKNEKRQKLVRKKQQEAQGEKVSRYIENVLKPSQEMKLKKLEERFYQMTGETWKLSNGHKLGGDEDLELDSESQTSFETSNREAAKRRNLPNSVTNISPPAEQPTKKEVLDLPEEPPETAEEVVTVALRCPSGRVLRRRFFKSCSSQVLFDWMMKLGYRTSLYSLSTSFPRRPLEVEAGWSLQDIGITVDTVLNVEEKEQSS.

A topological domain (cytoplasmic) is located at residue methionine 1. Residues 2–22 (ASRGVVGIFLLSALPLLCLEL) traverse the membrane as a helical segment. The Lumenal portion of the chain corresponds to 23-33 (RRGKPDLGIKD). The helical transmembrane segment at 34 to 54 (LILLCGRIFLLLALLTLIISV) threads the bilayer. Topologically, residues 55–275 (TTSWVNSFKP…LNVEEKEQSS (221 aa)) are cytoplasmic. The disordered stretch occupies residues 137–181 (DEDLELDSESQTSFETSNREAAKRRNLPNSVTNISPPAEQPTKKE). The UBX domain occupies 192–268 (TAEEVVTVAL…GITVDTVLNV (77 aa)).

Interacts with SYVN1 and VCP.

The protein localises to the endoplasmic reticulum membrane. Functionally, involved in endoplasmic reticulum-associated degradation (ERAD) for misfolded lumenal proteins, possibly by tethering VCP to the endoplasmic reticulum membrane. May play a role in reproduction. Its function is as follows. May play a role in reproduction. This chain is UBX domain-containing protein 8 (UBXN8), found in Bos taurus (Bovine).